Reading from the N-terminus, the 87-residue chain is Dynein light chain 1, cytoplasmic (87 aa).

Belongs to the dynein light chain family. As to quaternary structure, homodimer. Cytoplasmic dynein consists of two catalytic heavy chains (HCs) and a number of non-catalytic subunits which present intermediate chains (ICs), light intermediate chains (LICs) and light chains (LCs). Component of the nuclear pore complex (NPC). NPC constitutes the exclusive means of nucleocytoplasmic transport. NPCs allow the passive diffusion of ions and small molecules and the active, nuclear transport receptor-mediated bidirectional transport of macromolecules such as proteins, RNAs, ribonucleoparticles (RNPs), and ribosomal subunits across the nuclear envelope. Due to its 8-fold rotational symmetry, all subunits are present with 8 copies or multiples thereof.

The protein localises to the cytoplasm. It localises to the cytoskeleton. It is found in the nucleus. Its subcellular location is the nuclear pore complex. Acts as one of several non-catalytic accessory components of the cytoplasmic dynein complex that are thought to be involved in linking dynein to cargos and to adapter proteins that regulate dynein function. Cytoplasmic dynein 1 acts as a motor for the intracellular retrograde motility of vesicles and organelles along microtubules. May play a role in changing or maintaining the spatial distribution of cytoskeletal structures. Also a component of the nuclear pore complex. The polypeptide is Dynein light chain 1, cytoplasmic (DYN2) (Kluyveromyces lactis (strain ATCC 8585 / CBS 2359 / DSM 70799 / NBRC 1267 / NRRL Y-1140 / WM37) (Yeast)).